A 516-amino-acid chain; its full sequence is uncharacterized protein (516 aa).

Residues 1–35 (MAERTSESSSESASFDLEKQQSNHHDRYQSSVSSE) are disordered. Residues 16-28 (DLEKQQSNHHDRY) show a composition bias toward basic and acidic residues. Residue Ser-31 is modified to Phosphoserine. The next 12 membrane-spanning stretches (helical) occupy residues 77 to 97 (VAVM…FSGA), 111 to 131 (VALL…VVWA), 143 to 163 (MIIA…AKDI), 166 to 186 (VMIC…TVAG), 198 to 218 (GLVI…SPIV), 231 to 251 (WTSY…IIFH), 301 to 321 (LLIF…VYGI), 345 to 365 (SLPY…VALF), 386 to 406 (LPSM…LAWT), 412 to 432 (IHWI…ITIF), 439 to 461 (IIDC…RSSF), and 481 to 501 (AGSL…MLFL).

It belongs to the major facilitator superfamily.

The protein resides in the membrane. This is an uncharacterized protein from Schizosaccharomyces pombe (strain 972 / ATCC 24843) (Fission yeast).